The sequence spans 404 residues: S-adenosylmethionine synthase (404 aa).

His-18 contributes to the ATP binding site. Asp-20 contributes to the Mg(2+) binding site. Position 46 (Glu-46) interacts with K(+). Residues Glu-59 and Gln-102 each contribute to the L-methionine site. The flexible loop stretch occupies residues Gln-102–His-112. ATP contacts are provided by residues Asp-178–Lys-180, Lys-249–Phe-250, Asp-258, Arg-264–Lys-265, Ala-281, and Lys-285. Asp-258 lines the L-methionine pocket. Lys-289 serves as a coordination point for L-methionine.

The protein belongs to the AdoMet synthase family. As to quaternary structure, homotetramer; dimer of dimers. The cofactor is Mg(2+). K(+) serves as cofactor.

The protein localises to the cytoplasm. The enzyme catalyses L-methionine + ATP + H2O = S-adenosyl-L-methionine + phosphate + diphosphate. The protein operates within amino-acid biosynthesis; S-adenosyl-L-methionine biosynthesis; S-adenosyl-L-methionine from L-methionine: step 1/1. Catalyzes the formation of S-adenosylmethionine (AdoMet) from methionine and ATP. The overall synthetic reaction is composed of two sequential steps, AdoMet formation and the subsequent tripolyphosphate hydrolysis which occurs prior to release of AdoMet from the enzyme. This chain is S-adenosylmethionine synthase, found in Rhodococcus opacus (strain B4).